A 301-amino-acid chain; its full sequence is Glutathione transport system permease protein GsiD (301 aa).

Helical transmembrane passes span 37-57 (VAVAAGLFVLLLIAIAFWAQY), 103-123 (LAAGIFSVLVGMMIGTTLGLL), 141-161 (VLFAFPGILLAIAVVAIMGSG), 162-182 (MANVVVAVAIFSIPAFARLVR), 220-240 (IVVFFSMRIGMSIITAASLSF), and 264-284 (VIAPHVAIFPSLAIFLTVLAF). The ABC transmembrane type-1 domain occupies 99–288 (TRISLAAGIF…LTVLAFNLLG (190 aa)).

It belongs to the binding-protein-dependent transport system permease family. As to quaternary structure, the complex is composed of two ATP-binding proteins (GsiA), two transmembrane proteins (GsiC and GsiD) and a solute-binding protein (GsiB).

It localises to the cell inner membrane. Part of the ABC transporter complex GsiABCD involved in glutathione import. Probably responsible for the translocation of the substrate across the membrane. This is Glutathione transport system permease protein GsiD from Pectobacterium atrosepticum (strain SCRI 1043 / ATCC BAA-672) (Erwinia carotovora subsp. atroseptica).